The chain runs to 152 residues: UPF0756 membrane protein CA_C0092 (152 aa).

4 helical membrane-spanning segments follow: residues 5-25, 50-70, 82-102, and 117-137; these read IILV…VAIS, MFWG…QGNV, FVGI…GVGL, and LILG…GPLI.

It belongs to the UPF0756 family.

It localises to the cell membrane. The protein is UPF0756 membrane protein CA_C0092 of Clostridium acetobutylicum (strain ATCC 824 / DSM 792 / JCM 1419 / IAM 19013 / LMG 5710 / NBRC 13948 / NRRL B-527 / VKM B-1787 / 2291 / W).